The chain runs to 52 residues: Rubredoxin (52 aa).

N-formylmethionine; partial is present on Met-1. In terms of domain architecture, Rubredoxin-like spans 1-52 (MKKYGCLVCGYVYDPAKGDPDHGIAPGTAFEDLPADWVCPLCGVSKDEFEPL). 4 residues coordinate Fe cation: Cys-6, Cys-9, Cys-39, and Cys-42.

The protein belongs to the rubredoxin family. The cofactor is Fe(3+). Post-translationally, observed in four forms, with and without iron, and with and without formylation at Met-1.

Rubredoxin is a small nonheme, iron protein lacking acid-labile sulfide. Its single Fe, chelated to 4 Cys, functions as an electron acceptor and may also stabilize the conformation of the molecule. The protein is Rubredoxin of Heliobacterium mobile (Heliobacillus mobilis).